Here is a 379-residue protein sequence, read N- to C-terminus: Alcohol dehydrogenase 2 (379 aa).

Zn(2+) is bound by residues Cys-47, Thr-49, His-69, Cys-99, Cys-102, Cys-105, Cys-113, and Cys-177. Residues Thr-49 and His-69 each coordinate an alcohol. Position 49 (Thr-49) interacts with NAD(+). NAD(+)-binding positions include 202-207 (GLGAVG), Asp-226, Lys-231, Thr-272, Val-295, 295-297 (VGV), Phe-322, and Arg-372.

The protein belongs to the zinc-containing alcohol dehydrogenase family. In terms of assembly, homodimer. Requires Zn(2+) as cofactor.

The protein resides in the cytoplasm. It catalyses the reaction a primary alcohol + NAD(+) = an aldehyde + NADH + H(+). It carries out the reaction a secondary alcohol + NAD(+) = a ketone + NADH + H(+). The protein is Alcohol dehydrogenase 2 (ADH2) of Oryza sativa subsp. indica (Rice).